The sequence spans 542 residues: Berberine bridge enzyme-like 25 (542 aa).

The signal sequence occupies residues 1–30 (MGNSKPLPTISCISVFALYFSFYTITLTSS). Cys-40 and Cys-104 are oxidised to a cystine. N-linked (GlcNAc...) asparagine glycosylation occurs at Asn-61. Residues 82-258 (TMPKPGFIFK…LSWKIKLVPV (177 aa)) form the FAD-binding PCMH-type domain. His-119 is subject to Pros-8alpha-FAD histidine. N-linked (GlcNAc...) asparagine glycans are attached at residues Asn-308 and Asn-436.

Belongs to the oxygen-dependent FAD-linked oxidoreductase family. Requires FAD as cofactor.

It is found in the secreted. The protein resides in the cell wall. The sequence is that of Berberine bridge enzyme-like 25 from Arabidopsis thaliana (Mouse-ear cress).